The chain runs to 104 residues: Flagellar hook-basal body complex protein FliE (104 aa).

The protein belongs to the FliE family.

The protein resides in the bacterial flagellum basal body. This Salmonella agona (strain SL483) protein is Flagellar hook-basal body complex protein FliE.